Here is a 465-residue protein sequence, read N- to C-terminus: Glutamate--tRNA ligase (465 aa).

The 'HIGH' region motif lies at 11 to 21 (PSPTGFIHLGN). The span at 120–131 (KPRYDGTWRPEP) shows a compositional bias: basic and acidic residues. Positions 120–139 (KPRYDGTWRPEPGKVLPTPP) are disordered. Residues 243–247 (KMSKR) carry the 'KMSKS' region motif. Position 246 (Lys-246) interacts with ATP.

Belongs to the class-I aminoacyl-tRNA synthetase family. Glutamate--tRNA ligase type 1 subfamily. Monomer.

Its subcellular location is the cytoplasm. It carries out the reaction tRNA(Glu) + L-glutamate + ATP = L-glutamyl-tRNA(Glu) + AMP + diphosphate. Catalyzes the attachment of glutamate to tRNA(Glu) in a two-step reaction: glutamate is first activated by ATP to form Glu-AMP and then transferred to the acceptor end of tRNA(Glu). In Ralstonia nicotianae (strain ATCC BAA-1114 / GMI1000) (Ralstonia solanacearum), this protein is Glutamate--tRNA ligase.